Reading from the N-terminus, the 145-residue chain is 3-dehydroquinate dehydratase (145 aa).

Catalysis depends on Tyr-22, which acts as the Proton acceptor. Positions 73, 79, and 86 each coordinate substrate. The active-site Proton donor is the His-99. Residues 100-101 (LS) and Arg-110 contribute to the substrate site.

The protein belongs to the type-II 3-dehydroquinase family. As to quaternary structure, homododecamer.

It carries out the reaction 3-dehydroquinate = 3-dehydroshikimate + H2O. The protein operates within metabolic intermediate biosynthesis; chorismate biosynthesis; chorismate from D-erythrose 4-phosphate and phosphoenolpyruvate: step 3/7. In terms of biological role, catalyzes a trans-dehydration via an enolate intermediate. The chain is 3-dehydroquinate dehydratase from Prochlorococcus marinus (strain NATL1A).